A 373-amino-acid polypeptide reads, in one-letter code: Leucine aminopeptidase 1 (373 aa).

Residues 1–18 form the signal peptide; that stretch reads MKLLSVLALSATASSVLG. Positions 19–75 are excised as a propeptide; that stretch reads ASIPVDTRAEKFLIELAPGETRWVTEEEKWALKESGQDFFDITDEEVGFTAAVAQPA. Zn(2+) contacts are provided by His176 and Asp195. Asn196 carries N-linked (GlcNAc...) asparagine glycosylation. Residues Glu234 and Asp261 each contribute to the Zn(2+) site. A glycan (N-linked (GlcNAc...) asparagine) is linked at Asn288. Cys310 and Cys314 are oxidised to a cystine. His343 serves as a coordination point for Zn(2+). Asn348 carries an N-linked (GlcNAc...) asparagine glycan.

The protein belongs to the peptidase M28 family. M28E subfamily. As to quaternary structure, monomer. It depends on Zn(2+) as a cofactor.

Its subcellular location is the secreted. Functionally, extracellular aminopeptidase that allows assimilation of proteinaceous substrates. In Arthroderma gypseum (strain ATCC MYA-4604 / CBS 118893) (Microsporum gypseum), this protein is Leucine aminopeptidase 1 (LAP1).